Consider the following 502-residue polypeptide: MSQEKYIMAIDQGTTSSRAIIFNKKGEKVSSSQKEFTQIFPQAGWVEHNANEIWNSVQSVIAGAFIESGVKPNQIEAIGITNQRETTVVWDKKTGLPIYNAIVWQSRQTAPLAEQLKSQGYVEKFHEKTGLIIDAYFSATKVRWILDHVEGAQERAEKGELLFGTIDTWLVWKLTDGAAHVTDYSNAARTMLYNIKELKWDDEILEILNIPKAILPEVRSNSEIYGKTAPFHFYGGEVPISGMAGDQQAALFGQLAFEPGMVKNTYGTGSFIIMNTGEEMQLSENNLLTTIGYGINGKVYYALEGSIFIAGSAIQWLRDGLRMVENSPESEKYARDSHNNDEVYVVPAFTGLGAPYWNQNARGSVFGLTRGTSKEDFIKATLQSIAYQVRDIIDTMQVDTQTTIQVLKVDGGAAMNNFLMQFQADILGIDIARAKNLETTALGAAFLAGLSVGYWKDLDELKLLNETGELFEPSMNESRKEQLYKGWKKAVKATQVFAEVDD.

T14 provides a ligand contact to ADP. ATP contacts are provided by T14, T15, and S16. T14 provides a ligand contact to sn-glycerol 3-phosphate. R18 serves as a coordination point for ADP. Residues R84, E85, and Y136 each contribute to the sn-glycerol 3-phosphate site. Glycerol is bound by residues R84, E85, and Y136. H232 carries the phosphohistidine; by HPr modification. D246 contributes to the sn-glycerol 3-phosphate binding site. Residues D246 and Q247 each contribute to the glycerol site. T268 and G311 together coordinate ADP. ATP contacts are provided by T268, G311, Q315, and G412. G412 and N416 together coordinate ADP.

Belongs to the FGGY kinase family. Homotetramer and homodimer (in equilibrium). Post-translationally, the phosphoenolpyruvate-dependent sugar phosphotransferase system (PTS), including enzyme I, and histidine-containing protein (HPr) are required for the phosphorylation, which leads to the activation of the enzyme.

The catalysed reaction is glycerol + ATP = sn-glycerol 3-phosphate + ADP + H(+). It participates in polyol metabolism; glycerol degradation via glycerol kinase pathway; sn-glycerol 3-phosphate from glycerol: step 1/1. Its activity is regulated as follows. Activated by phosphorylation and inhibited by fructose 1,6-bisphosphate (FBP). Functionally, key enzyme in the regulation of glycerol uptake and metabolism. Catalyzes the phosphorylation of glycerol to yield sn-glycerol 3-phosphate. This Streptococcus pneumoniae (strain 70585) protein is Glycerol kinase.